Reading from the N-terminus, the 62-residue chain is Large ribosomal subunit protein bL28 (62 aa).

The tract at residues 1 to 28 (MARVCTITGRKARSGNSRSHAMNATKRK) is disordered.

The protein belongs to the bacterial ribosomal protein bL28 family.

The polypeptide is Large ribosomal subunit protein bL28 (Bacillus anthracis (strain CDC 684 / NRRL 3495)).